A 255-amino-acid polypeptide reads, in one-letter code: Sushi domain-containing protein 3 (255 aa).

The tract at residues 1-25 (MRWAAATLRGKARPRGRAGVTTPAP) is disordered. The Extracellular portion of the chain corresponds to 1 to 103 (MRWAAATLRG…VPPHETFGFK (103 aa)). Asn27 carries an N-linked (GlcNAc...) asparagine glycan. The 64-residue stretch at 30–93 (GTCAKLRLPP…WSSGSPVCKL (64 aa)) folds into the Sushi domain. 2 disulfide bridges follow: Cys32/Cys75 and Cys61/Cys91. A helical transmembrane segment spans residues 104–124 (VAVIASIVSCAIILLMSMAFL). Residues 125 to 255 (TCCLLKCVKK…PQQPAAYALG (131 aa)) lie on the Cytoplasmic side of the membrane. The segment at 173–255 (SGPSQAHDNH…PQQPAAYALG (83 aa)) is disordered. Over residues 179-191 (HDNHSFTTDHGES) the composition is skewed to basic and acidic residues.

As to expression, highly expressed in estrogen receptor-positive breast tumors.

Its subcellular location is the cell membrane. Its function is as follows. May play a role in breast tumorigenesis by promoting estrogen-dependent cell proliferation, cell-cell interactions and migration. This chain is Sushi domain-containing protein 3 (SUSD3), found in Homo sapiens (Human).